Reading from the N-terminus, the 142-residue chain is ATP synthase epsilon chain (142 aa).

The protein belongs to the ATPase epsilon chain family. F-type ATPases have 2 components, CF(1) - the catalytic core - and CF(0) - the membrane proton channel. CF(1) has five subunits: alpha(3), beta(3), gamma(1), delta(1), epsilon(1). CF(0) has three main subunits: a, b and c.

It is found in the cell inner membrane. Produces ATP from ADP in the presence of a proton gradient across the membrane. The polypeptide is ATP synthase epsilon chain (Coxiella burnetii (strain CbuK_Q154) (Coxiella burnetii (strain Q154))).